The chain runs to 508 residues: Photosystem II CP47 reaction center protein (508 aa).

Transmembrane regions (helical) follow at residues 21-36 (AVHI…WAGS), 101-115 (IVFS…IWHW), 140-156 (GIHL…FGAF), 203-218 (IAAG…FHLS), 237-252 (VLSS…AFVV), and 457-472 (TFAL…HGAR).

This sequence belongs to the PsbB/PsbC family. PsbB subfamily. In terms of assembly, PSII is composed of 1 copy each of membrane proteins PsbA, PsbB, PsbC, PsbD, PsbE, PsbF, PsbH, PsbI, PsbJ, PsbK, PsbL, PsbM, PsbT, PsbX, PsbY, PsbZ, Psb30/Ycf12, at least 3 peripheral proteins of the oxygen-evolving complex and a large number of cofactors. It forms dimeric complexes. Requires Binds multiple chlorophylls. PSII binds additional chlorophylls, carotenoids and specific lipids. as cofactor.

The protein localises to the plastid. It is found in the chloroplast thylakoid membrane. Its function is as follows. One of the components of the core complex of photosystem II (PSII). It binds chlorophyll and helps catalyze the primary light-induced photochemical processes of PSII. PSII is a light-driven water:plastoquinone oxidoreductase, using light energy to abstract electrons from H(2)O, generating O(2) and a proton gradient subsequently used for ATP formation. This Agrostis stolonifera (Creeping bentgrass) protein is Photosystem II CP47 reaction center protein.